The primary structure comprises 714 residues: Polyribonucleotide nucleotidyltransferase (714 aa).

Mg(2+) is bound by residues aspartate 487 and aspartate 493. The KH domain maps to 554 to 613 (PRIEVMTIPVDKIREVIGSGGKVIREIVEKTGAKINIEDDGTIKIASASGKEIEAARKWI). The 69-residue stretch at 623 to 691 (GVVYEGTVVK…ERGKVRLSMK (69 aa)) folds into the S1 motif domain.

Belongs to the polyribonucleotide nucleotidyltransferase family. Requires Mg(2+) as cofactor.

The protein localises to the cytoplasm. It carries out the reaction RNA(n+1) + phosphate = RNA(n) + a ribonucleoside 5'-diphosphate. Involved in mRNA degradation. Catalyzes the phosphorolysis of single-stranded polyribonucleotides processively in the 3'- to 5'-direction. The chain is Polyribonucleotide nucleotidyltransferase from Allorhizobium ampelinum (strain ATCC BAA-846 / DSM 112012 / S4) (Agrobacterium vitis (strain S4)).